A 400-amino-acid chain; its full sequence is uncharacterized protein (400 aa).

The first 31 residues, 1–31 (MENPIKPVATRSIGIAVVLLVVGIVIGFAVG), serve as a signal peptide directing secretion.

This sequence belongs to the bacterial solute-binding protein 1 family. WtpA subfamily.

This is an uncharacterized protein from Thermoplasma acidophilum (strain ATCC 25905 / DSM 1728 / JCM 9062 / NBRC 15155 / AMRC-C165).